Reading from the N-terminus, the 1182-residue chain is DNA-directed RNA polymerase subunit beta (1182 aa).

The protein belongs to the RNA polymerase beta chain family. As to quaternary structure, the RNAP catalytic core consists of 2 alpha, 1 beta, 1 beta' and 1 omega subunit. When a sigma factor is associated with the core the holoenzyme is formed, which can initiate transcription.

The enzyme catalyses RNA(n) + a ribonucleoside 5'-triphosphate = RNA(n+1) + diphosphate. Its function is as follows. DNA-dependent RNA polymerase catalyzes the transcription of DNA into RNA using the four ribonucleoside triphosphates as substrates. The polypeptide is DNA-directed RNA polymerase subunit beta (Fervidobacterium nodosum (strain ATCC 35602 / DSM 5306 / Rt17-B1)).